The primary structure comprises 239 residues: Sugar fermentation stimulation protein homolog (239 aa).

This sequence belongs to the SfsA family.

This is Sugar fermentation stimulation protein homolog from Sinorhizobium medicae (strain WSM419) (Ensifer medicae).